Reading from the N-terminus, the 142-residue chain is Hemoglobin anodic subunit alpha (142 aa).

The residue at position 1 (S1) is an N-acetylserine. In terms of domain architecture, Globin spans 1–142; sequence SLSTKDKAVV…LALALADRYR (142 aa). H59 provides a ligand contact to O2. H88 provides a ligand contact to heme b.

The protein belongs to the globin family. Heterotetramer of two alpha chains and two beta chains. In terms of tissue distribution, red blood cells.

Its function is as follows. Involved in oxygen transport from gills to the various peripheral tissues. This Gymnothorax unicolor (Brown moray) protein is Hemoglobin anodic subunit alpha.